Reading from the N-terminus, the 249-residue chain is 5'-nucleotidase SurE (249 aa).

The a divalent metal cation site is built by aspartate 9, aspartate 10, serine 40, and asparagine 92.

It belongs to the SurE nucleotidase family. The cofactor is a divalent metal cation.

It is found in the cytoplasm. The enzyme catalyses a ribonucleoside 5'-phosphate + H2O = a ribonucleoside + phosphate. Its function is as follows. Nucleotidase that shows phosphatase activity on nucleoside 5'-monophosphates. The chain is 5'-nucleotidase SurE from Shewanella loihica (strain ATCC BAA-1088 / PV-4).